Reading from the N-terminus, the 544-residue chain is Cytochrome P450 monooxygenase verL (544 aa).

The chain crosses the membrane as a helical span at residues 3 to 23; that stretch reads VALFPILPIGCLLIYIIFKLW. Cys446 is a heme binding site. Positions 520-544 are disordered; that stretch reads QEKGIDGWKGKKESSSEENRGVSSR.

The protein belongs to the cytochrome P450 family. Requires heme as cofactor.

The protein resides in the membrane. Its pathway is mycotoxin biosynthesis. Functionally, cytochrome P450 monooxygenase; part of the gene cluster that mediates the biosynthesis of 11'-deoxyverticillin A, one of the dimeric epipolythiodioxopiperazines (ETPs) from the verticillin family that act as mycotoxins. 11'-deoxyverticillin A is required for normal conidiation. The nonribosomal peptide synthetase verP is speculated to be responsible for condensation of amino acids to form the carbon skeleton of verticillin, whereas the cluster-specific tailoring enzymes are involved in further modifications leading to the production of 11'-deoxyverticillin A. The polypeptide is Cytochrome P450 monooxygenase verL (Clonostachys rogersoniana).